A 280-amino-acid polypeptide reads, in one-letter code: Mevalonyl-coenzyme A hydratase SIDH (280 aa).

The PTS1-type peroxisomal targeting signal motif lies at 278–280 (SKL).

This sequence belongs to the enoyl-CoA hydratase/isomerase family.

Its subcellular location is the peroxisome. It participates in siderophore biosynthesis. Its function is as follows. Mevalonyl-coenzyme A hydratase; part of the gene cluster that mediates the biosynthesis of at least 11 siderophores, including beauverichelin A, dimerumic acid (DA), Na-dimethyl coprogen (NADC), eleutherazine B, ferricrocin (FC), fusarinine A, fusarinine C (FsC), metachelin A, mevalonolactone, rhodotorulic acid (RA) and tenellin. This cocktail of siderophores for iron metabolism is essential for virulence, and more specifically for the fungal virulence in penetrating through the host cuticle. Siderophore synthesis is also involved in conidial germination under iron-deficient conditions. For biosynthesis of fusarinine C, the transacylase SIDF transfers anhydromevalonyl to N(5)-hydroxyornithine. The required anhydromevalonyl-CoA moiety is derived from mevalonate by CoA ligation and dehydration catalyzed by SIDI and sidH respectively. SIDH is not essential for siderophore production, probably due to functional redundancy of this protein family, as there are 15 homologs of SIDH in B.bassiana. The protein is Mevalonyl-coenzyme A hydratase SIDH of Beauveria bassiana (strain ARSEF 2860) (White muscardine disease fungus).